The following is a 449-amino-acid chain: Sulfite exporter TauE/SafE family protein 5 (449 aa).

A run of 12 helical transmembrane segments spans residues 1–21 (MKTL…NANQ), 57–77 (AIIM…AGGI), 78–98 (GGGG…LKTA), 101–121 (FSAF…LFGG), 127–147 (YDLA…GVIC), 150–170 (VLPE…SSLK), 224–244 (IPWT…VIYL), 259–279 (PCGV…LIFT), 315–335 (AMSF…GMLI), 353–373 (TSFM…LLGM), 378–398 (TAYV…VLVQ), and 409–429 (IIVF…TSFG).

Belongs to the 4-toluene sulfonate uptake permease (TSUP) (TC 2.A.102) family.

Its subcellular location is the membrane. This is Sulfite exporter TauE/SafE family protein 5 from Arabidopsis thaliana (Mouse-ear cress).